Consider the following 138-residue polypeptide: Large ribosomal subunit protein uL16 (138 aa).

This sequence belongs to the universal ribosomal protein uL16 family. Part of the 50S ribosomal subunit.

In terms of biological role, binds 23S rRNA and is also seen to make contacts with the A and possibly P site tRNAs. In Syntrophobacter fumaroxidans (strain DSM 10017 / MPOB), this protein is Large ribosomal subunit protein uL16.